The chain runs to 623 residues: Chaperone protein HtpG (623 aa).

The segment at 1 to 328 (MTQEKKKFDA…SEDLPLNISR (328 aa)) is a; substrate-binding. The tract at residues 329 to 544 (ESLQHNSILD…ESAMDIRMER (216 aa)) is b. Residues 545–623 (FLIEQKQIAN…DIVQKAILSL (79 aa)) are c.

The protein belongs to the heat shock protein 90 family. In terms of assembly, homodimer.

The protein resides in the cytoplasm. In terms of biological role, molecular chaperone. Has ATPase activity. The sequence is that of Chaperone protein HtpG from Rickettsia canadensis (strain McKiel).